Reading from the N-terminus, the 266-residue chain is Putative transmembrane ascorbate-dependent reductase CYB561 homolog (266 aa).

Topologically, residues 1–22 are cytoplasmic; that stretch reads MSLLFDPGFVILREDQSVKLFN. A helical membrane pass occupies residues 23-43; sequence IILVMSQVFGGLAVLLVTIWM. The region spanning 27–240 is the Cytochrome b561 domain; the sequence is MSQVFGGLAV…YTVCVLLLVL (214 aa). Residues 44-61 are Vesicular-facing; the sequence is SKFESGFAWNEDPDKEFN. A helical membrane pass occupies residues 62–82; sequence YHPTFMIMGMVFLFGEALLVY. The heme b site is built by H63, R83, and K90. Residues 83 to 95 lie on the Cytoplasmic side of the membrane; that stretch reads RVFRNERKKFSKT. 2 residues coordinate L-ascorbate: K90 and K94. The chain crosses the membrane as a helical span at residues 96-116; the sequence is LHVILHSCVLVFMLMALKAVF. Heme b contacts are provided by residues H97, 134-137, and H139; that span reads NLVS. The Vesicular segment spans residues 117-141; the sequence is DYHNLHKDPSGNPAPIVNLVSLHSW. Residues 142 to 162 form a helical membrane-spanning segment; the sequence is IGLSVVILYFAQYIVGFITYF. The Cytoplasmic segment spans residues 163-176; it reads FPGMPIPIRQLVMP. R171 contacts L-ascorbate. Residues 177-197 form a helical membrane-spanning segment; it reads FHQMFGVLIFIFVSITVAMGI. The heme b site is built by H178 and E199. The Vesicular segment spans residues 198–219; it reads SERAAWKHTCWTKEGQMCAQQA. The chain crosses the membrane as a helical span at residues 220 to 240; that stretch reads TSSFVGVFTFLYTVCVLLLVL. The Cytoplasmic segment spans residues 241-266; the sequence is NPRWKRQSLPEEEGLHHLTSSHSMSD. K245 is a heme b binding site.

It depends on heme b as a cofactor.

The protein resides in the membrane. The catalysed reaction is monodehydro-L-ascorbate radical(out) + L-ascorbate(in) = monodehydro-L-ascorbate radical(in) + L-ascorbate(out). In terms of biological role, putative transmembrane reductase that uses ascorbate as an electron donor in the cytoplasm and transfers electrons across membranes to reduce monodehydro-L-ascorbate radical in the lumen of secretory vesicles. In Caenorhabditis elegans, this protein is Putative transmembrane ascorbate-dependent reductase CYB561 homolog.